The chain runs to 152 residues: uncharacterized protein (152 aa).

Topologically, residues Met1 to Gln5 are cytoplasmic. The chain crosses the membrane as a helical span at residues Ile6–Phe26. The Extracellular portion of the chain corresponds to Thr27–Arg38. Residues Gly39–Val59 traverse the membrane as a helical segment. Topologically, residues Glu60–Asn65 are cytoplasmic. A helical membrane pass occupies residues Phe66–Tyr86. The Extracellular segment spans residues Thr87–His110. Positions Asn92–Ala94 match the NPA motif. Residues Trp111–Leu131 traverse the membrane as a helical segment. Topologically, residues Gln132–Asp152 are cytoplasmic.

This sequence belongs to the MIP/aquaporin (TC 1.A.8) family.

The protein resides in the membrane. This is an uncharacterized protein from Saccharomyces cerevisiae (strain RM11-1a) (Baker's yeast).